Here is a 132-residue protein sequence, read N- to C-terminus: Putative esterase Ta0293 (132 aa).

This sequence belongs to the thioesterase PaaI family.

The polypeptide is Putative esterase Ta0293 (Thermoplasma acidophilum (strain ATCC 25905 / DSM 1728 / JCM 9062 / NBRC 15155 / AMRC-C165)).